The following is a 178-amino-acid chain: tRNA (cytidine(56)-2'-O)-methyltransferase (178 aa).

S-adenosyl-L-methionine-binding positions include Leu84, Gly109 to Val113, and Ile127 to Glu134.

The protein belongs to the aTrm56 family. As to quaternary structure, homodimer.

The protein localises to the cytoplasm. The catalysed reaction is cytidine(56) in tRNA + S-adenosyl-L-methionine = 2'-O-methylcytidine(56) in tRNA + S-adenosyl-L-homocysteine + H(+). In terms of biological role, specifically catalyzes the AdoMet-dependent 2'-O-ribose methylation of cytidine at position 56 in tRNAs. This Methanococcoides burtonii (strain DSM 6242 / NBRC 107633 / OCM 468 / ACE-M) protein is tRNA (cytidine(56)-2'-O)-methyltransferase.